A 464-amino-acid polypeptide reads, in one-letter code: ATP-dependent protease ATPase subunit HslU (464 aa).

ATP contacts are provided by residues I19, 61 to 66 (GVGKTE), D277, E342, and R414.

This sequence belongs to the ClpX chaperone family. HslU subfamily. As to quaternary structure, a double ring-shaped homohexamer of HslV is capped on each side by a ring-shaped HslU homohexamer. The assembly of the HslU/HslV complex is dependent on binding of ATP.

The protein resides in the cytoplasm. ATPase subunit of a proteasome-like degradation complex; this subunit has chaperone activity. The binding of ATP and its subsequent hydrolysis by HslU are essential for unfolding of protein substrates subsequently hydrolyzed by HslV. HslU recognizes the N-terminal part of its protein substrates and unfolds these before they are guided to HslV for hydrolysis. This Lactobacillus gasseri (strain ATCC 33323 / DSM 20243 / BCRC 14619 / CIP 102991 / JCM 1131 / KCTC 3163 / NCIMB 11718 / NCTC 13722 / AM63) protein is ATP-dependent protease ATPase subunit HslU.